We begin with the raw amino-acid sequence, 343 residues long: Cilia- and flagella-associated protein 36 (343 aa).

2 positions are modified to phosphoserine: Ser-85 and Ser-147. A coiled-coil region spans residues Ser-147–Glu-187. The interval Lys-165–Leu-188 is disordered. The residue at position 201 (Ser-201) is a Phosphoserine. 2 stretches are compositionally biased toward basic and acidic residues: residues Gln-279–Thr-293 and Gln-301–Lys-323. The interval Gln-279 to Lys-323 is disordered.

Belongs to the CFAP36 family. In terms of assembly, interacts with ARL3.

It localises to the nucleus. The protein localises to the cytoplasm. It is found in the cell projection. The protein resides in the cilium. Its subcellular location is the flagellum. May act as an effector for ARL3. The polypeptide is Cilia- and flagella-associated protein 36 (Mus musculus (Mouse)).